Here is a 296-residue protein sequence, read N- to C-terminus: Acetylglutamate kinase (296 aa).

Substrate is bound by residues 69 to 70 (GG), Arg91, and Asn192.

The protein belongs to the acetylglutamate kinase family. ArgB subfamily.

The protein localises to the cytoplasm. It catalyses the reaction N-acetyl-L-glutamate + ATP = N-acetyl-L-glutamyl 5-phosphate + ADP. It functions in the pathway amino-acid biosynthesis; L-arginine biosynthesis; N(2)-acetyl-L-ornithine from L-glutamate: step 2/4. Catalyzes the ATP-dependent phosphorylation of N-acetyl-L-glutamate. The chain is Acetylglutamate kinase from Ruthia magnifica subsp. Calyptogena magnifica.